Reading from the N-terminus, the 404-residue chain is Cysteine desulfurase IscS (404 aa).

Residues 75 to 76, N155, Q183, and 203 to 205 each bind pyridoxal 5'-phosphate; these read AT and SAH. K206 bears the N6-(pyridoxal phosphate)lysine mark. T243 provides a ligand contact to pyridoxal 5'-phosphate. C328 functions as the Cysteine persulfide intermediate in the catalytic mechanism. Residue C328 participates in [2Fe-2S] cluster binding.

Belongs to the class-V pyridoxal-phosphate-dependent aminotransferase family. NifS/IscS subfamily. In terms of assembly, homodimer. Forms a heterotetramer with IscU, interacts with other sulfur acceptors. Requires pyridoxal 5'-phosphate as cofactor.

Its subcellular location is the cytoplasm. The catalysed reaction is (sulfur carrier)-H + L-cysteine = (sulfur carrier)-SH + L-alanine. It functions in the pathway cofactor biosynthesis; iron-sulfur cluster biosynthesis. Its function is as follows. Master enzyme that delivers sulfur to a number of partners involved in Fe-S cluster assembly, tRNA modification or cofactor biosynthesis. Catalyzes the removal of elemental sulfur atoms from cysteine to produce alanine. Functions as a sulfur delivery protein for Fe-S cluster synthesis onto IscU, an Fe-S scaffold assembly protein, as well as other S acceptor proteins. The sequence is that of Cysteine desulfurase IscS from Ectopseudomonas mendocina (strain ymp) (Pseudomonas mendocina).